Reading from the N-terminus, the 382-residue chain is uncharacterized protein (382 aa).

A run of 12 helical transmembrane segments spans residues Gly-14–Ala-34, Val-45–Ile-65, Phe-79–Ala-99, Phe-102–Ser-122, Leu-131–Ser-151, Leu-157–Phe-177, Leu-204–Pro-224, Ala-235–Ile-255, Val-270–Pro-290, Ala-291–Cys-311, Ala-325–Met-345, and Phe-348–Leu-368.

This sequence belongs to the major facilitator superfamily. YcaD (TC 2.A.1.26) family.

It localises to the cell inner membrane. This is an uncharacterized protein from Escherichia coli (strain K12 / MC4100 / BW2952).